The chain runs to 290 residues: Arylamine N-acetyltransferase, pineal gland isozyme NAT-3 (290 aa).

Residue C68 is the Acyl-thioester intermediate of the active site. Catalysis depends on residues H107 and D122.

The protein belongs to the arylamine N-acetyltransferase family.

It carries out the reaction an arylamine + acetyl-CoA = an N-acetylarylamine + CoA. The enzyme catalyses an N-hydroxyarylamine + acetyl-CoA = an N-acetoxyarylamine + CoA. In terms of biological role, catalyzes the N- or O-acetylation of various arylamine and heterocyclic amine substrates, and participates in the detoxification of a plethora of hydrazine and arylamine drugs. This is Arylamine N-acetyltransferase, pineal gland isozyme NAT-3 from Gallus gallus (Chicken).